We begin with the raw amino-acid sequence, 378 residues long: Mannitol-1-phosphate 5-dehydrogenase (378 aa).

Residue 4–15 coordinates NAD(+); sequence SVHFGAGNIGRG.

It belongs to the mannitol dehydrogenase family.

It catalyses the reaction D-mannitol 1-phosphate + NAD(+) = beta-D-fructose 6-phosphate + NADH + H(+). The chain is Mannitol-1-phosphate 5-dehydrogenase from Streptococcus pneumoniae serotype 4 (strain ATCC BAA-334 / TIGR4).